The sequence spans 175 residues: Co-chaperone protein HscB homolog (175 aa).

The 73-residue stretch at 7–79 (SHFDLFDLPA…LKRATYLLHL (73 aa)) folds into the J domain.

Belongs to the HscB family. As to quaternary structure, interacts with HscA and stimulates its ATPase activity.

Its function is as follows. Co-chaperone involved in the maturation of iron-sulfur cluster-containing proteins. Seems to help targeting proteins to be folded toward HscA. The protein is Co-chaperone protein HscB homolog of Paraburkholderia xenovorans (strain LB400).